A 330-amino-acid chain; its full sequence is Pyridoxal 5'-phosphate synthase subunit PdxS (330 aa).

Residue Asp-23 coordinates D-ribose 5-phosphate. Lys-80 (schiff-base intermediate with D-ribose 5-phosphate) is an active-site residue. Gly-152 lines the D-ribose 5-phosphate pocket. Arg-164 contributes to the D-glyceraldehyde 3-phosphate binding site. Residues Gly-250 and 271–272 (GS) contribute to the D-ribose 5-phosphate site.

Belongs to the PdxS/SNZ family. In terms of assembly, in the presence of PdxT, forms a dodecamer of heterodimers.

The enzyme catalyses aldehydo-D-ribose 5-phosphate + D-glyceraldehyde 3-phosphate + L-glutamine = pyridoxal 5'-phosphate + L-glutamate + phosphate + 3 H2O + H(+). It functions in the pathway cofactor biosynthesis; pyridoxal 5'-phosphate biosynthesis. Its function is as follows. Catalyzes the formation of pyridoxal 5'-phosphate from ribose 5-phosphate (RBP), glyceraldehyde 3-phosphate (G3P) and ammonia. The ammonia is provided by the PdxT subunit. Can also use ribulose 5-phosphate and dihydroxyacetone phosphate as substrates, resulting from enzyme-catalyzed isomerization of RBP and G3P, respectively. The sequence is that of Pyridoxal 5'-phosphate synthase subunit PdxS from Methanocaldococcus jannaschii (strain ATCC 43067 / DSM 2661 / JAL-1 / JCM 10045 / NBRC 100440) (Methanococcus jannaschii).